The chain runs to 179 residues: Apoptosis regulator Bcl-2 homolog (179 aa).

Residues 76–95 carry the BH1 motif; that stretch reads ELFKDLINWGRICGFIVFSA. The BH2 motif lies at 126–141; it reads PWMISHGGQEEFLAFS.

This sequence belongs to the Bcl-2 family. As to quaternary structure, interacts with host BECN1 (via BH3 homology domain); this interaction allows the virus to inhibit BECN1, and thus autophagy. Interacts with host BID. Interacts with host BAX.

The protein localises to the host mitochondrion. It is found in the host endoplasmic reticulum. In terms of biological role, suppresses apoptosis in host cell to promote the viral replication. Has the ability to potentially bind to all the members of the proapoptotic Bcl-2 family. Inhibits autophagy by interacting with host Beclin 1 (BECN1). This is Apoptosis regulator Bcl-2 homolog from African swine fever virus (isolate Pig/Kenya/KEN-50/1950) (ASFV).